The primary structure comprises 1558 residues: ABC transporter NFT1 (1558 aa).

Residues 1-29 are Extracellular-facing; the sequence is MIKNGTCPYWERDDLSECARREYIEFKFP. Asn-4 carries an N-linked (GlcNAc...) asparagine glycan. Residues 30–50 form a helical membrane-spanning segment; it reads LFILLTGMIYAFCKVFRAFYL. Over 51-103 the chain is Cytoplasmic; sequence RGKNHTNEAPEFEEQGNGNHEYARFSVLRLKSAWESRSFCNVNNRSTFDKFKK. Residues 104–124 traverse the membrane as a helical segment; that stretch reads FIEGAFIVLQLTIHLYILSSM. Topologically, residues 125-130 are extracellular; sequence PMDNKK. Residues 131 to 151 traverse the membrane as a helical segment; it reads FFHQGFLVQMFLWILLLVVIT. Over 152–169 the chain is Cytoplasmic; sequence LRLISASQSFRWVLACKR. The chain crosses the membrane as a helical span at residues 170–190; sequence DLWAVSFYSYASLFTLSILPL. The Extracellular segment spans residues 191–201; that stretch reads RSVFIGKIKDK. A helical membrane pass occupies residues 202 to 222; sequence IMVKYIISETFIDLALLLLLS. The Cytoplasmic segment spans residues 223–302; the sequence is TSSIEGTRYS…SSKKGRLLPN (80 aa). The helical transmembrane segment at 303–323 threads the bilayer; it reads IICYFKAVFISQLFLAFVSSF. The ABC transmembrane type-1 1 domain maps to 311 to 621; it reads FISQLFLAFV…IASTVSLLIQ (311 aa). Over 324–351 the chain is Extracellular; it reads LNFVPSLLMPRILSYVNDPKSKSWNLVS. A helical membrane pass occupies residues 352 to 374; the sequence is LYVSSMLVSKIIATTCRGQGLFL. Topologically, residues 375–449 are cytoplasmic; it reads GEKGTMQLRT…VMSIDAFKVS (75 aa). Residues 410–434 form a disordered region; that stretch reads NASTSFEENPDSSEAEPRKKSSRKD. A compositionally biased stretch (basic and acidic residues) spans 424-434; that stretch reads AEPRKKSSRKD. Residues 450 to 470 form a helical membrane-spanning segment; the sequence is EAMNTFYLACEAVFMTVTALM. Residues 471–481 lie on the Extracellular side of the membrane; it reads ILYSLLGWSAF. A helical membrane pass occupies residues 482 to 504; that stretch reads AGTFALLAMIPLNFWCATFYGNY. The Cytoplasmic segment spans residues 505 to 558; sequence QADQLILTDKRTSGISEALNSIRVIKLLAWENLFYQKIINVRDGEIRLLKKKAT. Residues 559-579 traverse the membrane as a helical segment; it reads IFFLNHLIWFFGPTLVSAITF. Residues 580–584 are Extracellular-facing; the sequence is SVFIK. Residues 585–605 form a helical membrane-spanning segment; the sequence is FQNQTLTPTIAFTALSLFAIL. At 606-953 the chain is on the cytoplasmic side; the sequence is RTPMDQIAST…KFSAYKWLAD (348 aa). The ABC transporter 1 domain maps to 651–892; that stretch reads FGFEDASMEW…NEFLRESINN (242 aa). An ATP-binding site is contributed by 686-693; it reads GPTGSGKS. Positions 892-901 are enriched in polar residues; it reads NDSKNTTHNQ. Residues 892–926 are disordered; that stretch reads NDSKNTTHNQIDLKRSTTSKKTKNGDPEGGNSQDE. A helical transmembrane segment spans residues 954-974; the sequence is YFGGLGVVFVFTSSSILIHGI. The ABC transmembrane type-1 2 domain occupies 961–1251; sequence VFVFTSSSIL…IIKVFSSVEL (291 aa). Residues 975–1013 lie on the Extracellular side of the membrane; it reads TLSQGFWLRYWLDTGSSGSKSTWLYRIVEGHSNIYFLLT. The chain crosses the membrane as a helical span at residues 1014–1034; it reads YIIIGLVSSFLTSGKVWIAII. Topologically, residues 1035-1082 are cytoplasmic; that stretch reads SGTNVTKKIFAKLLSSILYAKLRFHNVTPTGRIMNRFSKDMDIIDQQL. The helical transmembrane segment at 1083–1105 threads the bilayer; sequence IPNFEGLSYSVVVCLWIILLIGY. Over 1106–1109 the chain is Extracellular; that stretch reads VTPQ. The helical transmembrane segment at 1110–1132 threads the bilayer; it reads FLLFAIPLCALYYTVCTLYLRAS. Topologically, residues 1133–1199 are cytoplasmic; that stretch reads RELKRIDNIN…ATEWITYRVD (67 aa). Residues 1200 to 1220 form a helical membrane-spanning segment; sequence IIGTLVLFSSSVMIIMKASYL. Over 1221 to 1222 the chain is Extracellular; it reads DA. The helical transmembrane segment at 1223–1243 threads the bilayer; sequence GLAGILLSNAFSFTETAQWII. The Cytoplasmic segment spans residues 1244–1558; sequence KVFSSVELLM…LAKVSFDNKR (315 aa). The ABC transporter 2 domain occupies 1285-1538; it reads VELKNLSLRY…RNTIFYRLCR (254 aa). 1319–1326 lines the ATP pocket; the sequence is GRTGAGKS.

Belongs to the ABC transporter superfamily. ABCC family. Conjugate transporter (TC 3.A.1.208) subfamily.

Its subcellular location is the membrane. In Saccharomyces cerevisiae (Baker's yeast), this protein is ABC transporter NFT1 (NFT1).